A 440-amino-acid chain; its full sequence is GTPase Obg (440 aa).

One can recognise an Obg domain in the interval 5 to 163 (STFVDQTKIE…RTLRLELKVL (159 aa)). The 175-residue stretch at 164 to 338 (ADVGLVGFPS…LMSRAADLVS (175 aa)) folds into the OBG-type G domain. Residues 170–177 (GFPSVGKS), 195–199 (FTTLK), 217–220 (DLPG), 288–291 (SQMD), and 319–321 (SSV) each bind GTP. The Mg(2+) site is built by serine 177 and threonine 197. The OCT domain maps to 362–440 (YHRPEKMEFT…IGDFSFEFVQ (79 aa)).

The protein belongs to the TRAFAC class OBG-HflX-like GTPase superfamily. OBG GTPase family. As to quaternary structure, monomer. Requires Mg(2+) as cofactor.

It localises to the cytoplasm. Its function is as follows. An essential GTPase which binds GTP, GDP and possibly (p)ppGpp with moderate affinity, with high nucleotide exchange rates and a fairly low GTP hydrolysis rate. Plays a role in control of the cell cycle, stress response, ribosome biogenesis and in those bacteria that undergo differentiation, in morphogenesis control. The sequence is that of GTPase Obg from Lactobacillus delbrueckii subsp. bulgaricus (strain ATCC BAA-365 / Lb-18).